Consider the following 125-residue polypeptide: Holo-[acyl-carrier-protein] synthase (125 aa).

2 residues coordinate Mg(2+): glutamate 9 and glutamine 58.

This sequence belongs to the P-Pant transferase superfamily. AcpS family. It depends on Mg(2+) as a cofactor.

It localises to the cytoplasm. The enzyme catalyses apo-[ACP] + CoA = holo-[ACP] + adenosine 3',5'-bisphosphate + H(+). Functionally, transfers the 4'-phosphopantetheine moiety from coenzyme A to a Ser of acyl-carrier-protein. In Rhodopirellula baltica (strain DSM 10527 / NCIMB 13988 / SH1), this protein is Holo-[acyl-carrier-protein] synthase.